We begin with the raw amino-acid sequence, 348 residues long: GPALPP motifs-containing protein 1 (348 aa).

Disordered stretches follow at residues 1–163 and 177–317; these read MARD…AKGP and QRMK…DLKV. Residue A2 is modified to N-acetylalanine. Positions 7-12 match the GPALPP motif 1 motif; sequence GPALPP. Over residues 14–27 the composition is skewed to basic and acidic residues; sequence FKERATVEDQERDP. S28 carries the post-translational modification Phosphoserine. The short motif at 32 to 37 is the GPALPP motif 2 element; the sequence is GPALPP. Over residues 41 to 59 the composition is skewed to low complexity; sequence SSSSDSSDSNEDSSSLSEE. The span at 60–69 shows a compositional bias: acidic residues; that stretch reads GNQESEEDDA. Residues 93 to 98 carry the GPALPP motif 3 motif; that stretch reads GPALPP. The residue at position 106 (S106) is a Phosphoserine. Residues 108 to 117 are compositionally biased toward pro residues; that stretch reads PRPIIGPALP. The short motif at 113-118 is the GPALPP motif 4 element; the sequence is GPALPP. Phosphoserine occurs at positions 138, 143, and 148. The segment covering 144–154 has biased composition (acidic residues); it reads EEAESGEDEDI. 4 stretches are compositionally biased toward basic and acidic residues: residues 177–195, 235–269, 277–287, and 295–317; these read QRMKEKLTKGDDDSPKPVT, PADRERKAKEIQEARKSLSKKDEENMLSGRDKRLA, ESKRSESLMDI, and KAAEDKNRHQERTPFDRDKDLKV. Residues K279 and K316 each participate in a glycyl lysine isopeptide (Lys-Gly) (interchain with G-Cter in SUMO2) cross-link.

The polypeptide is GPALPP motifs-containing protein 1 (Gpalpp1) (Rattus norvegicus (Rat)).